Reading from the N-terminus, the 167-residue chain is Small ribosomal subunit protein uS5 (167 aa).

The S5 DRBM domain maps to 12-75 (LEERVVTINR…EDAKKNMVLV (64 aa)).

The protein belongs to the universal ribosomal protein uS5 family. Part of the 30S ribosomal subunit. Contacts proteins S4 and S8.

Functionally, with S4 and S12 plays an important role in translational accuracy. Its function is as follows. Located at the back of the 30S subunit body where it stabilizes the conformation of the head with respect to the body. This chain is Small ribosomal subunit protein uS5, found in Listeria monocytogenes serotype 4b (strain F2365).